We begin with the raw amino-acid sequence, 230 residues long: Phosphatidylserine decarboxylase proenzyme (230 aa).

S186 functions as the Schiff-base intermediate with substrate; via pyruvic acid in the catalytic mechanism. S186 is subject to Pyruvic acid (Ser); by autocatalysis.

The protein belongs to the phosphatidylserine decarboxylase family. PSD-A subfamily. As to quaternary structure, heterodimer of a large membrane-associated beta subunit and a small pyruvoyl-containing alpha subunit. The cofactor is pyruvate. Post-translationally, is synthesized initially as an inactive proenzyme. Formation of the active enzyme involves a self-maturation process in which the active site pyruvoyl group is generated from an internal serine residue via an autocatalytic post-translational modification. Two non-identical subunits are generated from the proenzyme in this reaction, and the pyruvate is formed at the N-terminus of the alpha chain, which is derived from the carboxyl end of the proenzyme. The post-translation cleavage follows an unusual pathway, termed non-hydrolytic serinolysis, in which the side chain hydroxyl group of the serine supplies its oxygen atom to form the C-terminus of the beta chain, while the remainder of the serine residue undergoes an oxidative deamination to produce ammonia and the pyruvoyl prosthetic group on the alpha chain.

The protein localises to the cell membrane. The enzyme catalyses a 1,2-diacyl-sn-glycero-3-phospho-L-serine + H(+) = a 1,2-diacyl-sn-glycero-3-phosphoethanolamine + CO2. It participates in phospholipid metabolism; phosphatidylethanolamine biosynthesis; phosphatidylethanolamine from CDP-diacylglycerol: step 2/2. Its function is as follows. Catalyzes the formation of phosphatidylethanolamine (PtdEtn) from phosphatidylserine (PtdSer). This chain is Phosphatidylserine decarboxylase proenzyme, found in Wolbachia sp. subsp. Brugia malayi (strain TRS).